A 167-amino-acid chain; its full sequence is Protein FimG (167 aa).

The first 23 residues, 1–23, serve as a signal peptide directing secretion; it reads MKWCKRGYVLAAILALASATIQA. Residues C39 and C77 are joined by a disulfide bond.

It belongs to the fimbrial protein family.

It is found in the fimbrium. In terms of biological role, involved in regulation of length and mediation of adhesion of type 1 fimbriae (but not necessary for the production of fimbriae). Involved in the integration of FimH in the fimbriae. This Escherichia coli (strain K12) protein is Protein FimG (fimG).